The sequence spans 95 residues: Exodeoxyribonuclease 7 small subunit (95 aa).

Positions 65 to 95 (ETINPAETARPAKPENAPESPRMNDLFGTES) are disordered.

The protein belongs to the XseB family. In terms of assembly, heterooligomer composed of large and small subunits.

Its subcellular location is the cytoplasm. It catalyses the reaction Exonucleolytic cleavage in either 5'- to 3'- or 3'- to 5'-direction to yield nucleoside 5'-phosphates.. Bidirectionally degrades single-stranded DNA into large acid-insoluble oligonucleotides, which are then degraded further into small acid-soluble oligonucleotides. This chain is Exodeoxyribonuclease 7 small subunit, found in Chlorobaculum tepidum (strain ATCC 49652 / DSM 12025 / NBRC 103806 / TLS) (Chlorobium tepidum).